Consider the following 321-residue polypeptide: Serpentine receptor class delta-63 (321 aa).

Helical transmembrane passes span 14 to 34 (LVYM…YNFT), 41 to 61 (VKYF…MAFA), 83 to 103 (YIGP…GIVV), 128 to 148 (LWTL…IVII), 190 to 208 (AAMS…GTYW), 240 to 260 (NFQI…YFMI), and 273 to 293 (TITV…IYFI).

This sequence belongs to the nematode receptor-like protein srd family.

It localises to the membrane. This Caenorhabditis elegans protein is Serpentine receptor class delta-63 (srd-63).